Here is a 255-residue protein sequence, read N- to C-terminus: Ribose-5-phosphate isomerase (255 aa).

It belongs to the ribose 5-phosphate isomerase family.

The protein localises to the cytoplasm. It carries out the reaction aldehydo-D-ribose 5-phosphate = D-ribulose 5-phosphate. Its pathway is carbohydrate degradation; pentose phosphate pathway; D-ribose 5-phosphate from D-ribulose 5-phosphate (non-oxidative stage): step 1/1. The polypeptide is Ribose-5-phosphate isomerase (RKI1) (Eremothecium gossypii (strain ATCC 10895 / CBS 109.51 / FGSC 9923 / NRRL Y-1056) (Yeast)).